A 357-amino-acid polypeptide reads, in one-letter code: Phospho-N-acetylmuramoyl-pentapeptide-transferase (357 aa).

Helical transmembrane passes span 23–43 (AIFSLLTSFFINLYIGPYFIY), 70–90 (TMGGIFIIFSILFSTILYCNL), 91–111 (SNIYIWYVISILIGYGLIGFI), 127–147 (LKWKYFFLSIIAFIFICMIKI), 171–191 (YLYIFLSYFVLVGTSNAVNLT), 196–216 (GLAIMPVIFLTCGLTLISLFS), 236–256 (LAILCMAIVGSGLGFLWFNSY), 260–280 (VFMGDVGSLALGGSLGAIAIL), 286–306 (LLIIMGGIFVFETISVILQII), and 334–354 (LIIVRFWIVSLILLLISLISL).

It belongs to the glycosyltransferase 4 family. MraY subfamily. The cofactor is Mg(2+).

The protein resides in the cell inner membrane. The catalysed reaction is UDP-N-acetyl-alpha-D-muramoyl-L-alanyl-gamma-D-glutamyl-meso-2,6-diaminopimeloyl-D-alanyl-D-alanine + di-trans,octa-cis-undecaprenyl phosphate = di-trans,octa-cis-undecaprenyl diphospho-N-acetyl-alpha-D-muramoyl-L-alanyl-D-glutamyl-meso-2,6-diaminopimeloyl-D-alanyl-D-alanine + UMP. The protein operates within cell wall biogenesis; peptidoglycan biosynthesis. Catalyzes the initial step of the lipid cycle reactions in the biosynthesis of the cell wall peptidoglycan: transfers peptidoglycan precursor phospho-MurNAc-pentapeptide from UDP-MurNAc-pentapeptide onto the lipid carrier undecaprenyl phosphate, yielding undecaprenyl-pyrophosphoryl-MurNAc-pentapeptide, known as lipid I. This chain is Phospho-N-acetylmuramoyl-pentapeptide-transferase, found in Buchnera aphidicola subsp. Acyrthosiphon pisum (strain APS) (Acyrthosiphon pisum symbiotic bacterium).